The following is a 200-amino-acid chain: Superoxide dismutase [Mn] 1 (200 aa).

Mn(2+) is bound by residues H29, H76, D158, and H162.

This sequence belongs to the iron/manganese superoxide dismutase family. In terms of assembly, homodimer or homotetramer. Requires Mn(2+) as cofactor.

The catalysed reaction is 2 superoxide + 2 H(+) = H2O2 + O2. Inhibited by hydrogen peroxide. Is resistant to cyanide and azide inhibition. In terms of biological role, destroys superoxide anion radicals which are normally produced within the cells and which are toxic to biological systems. This chain is Superoxide dismutase [Mn] 1 (sod1), found in Halobacterium salinarum (strain ATCC 700922 / JCM 11081 / NRC-1) (Halobacterium halobium).